Here is a 208-residue protein sequence, read N- to C-terminus: Frataxin, mitochondrial (208 aa).

The transit peptide at Met-1 to Gly-40 directs the protein to the mitochondrion.

Belongs to the frataxin family. In terms of assembly, component of the mitochondrial core iron-sulfur cluster (ISC) complex composed of NFS1, LYRM4, NDUFAB1, ISCU, FXN, and FDX2; this complex is a heterohexamer containing two copies of each monomer. Homodimer. Monomer (probable predominant form). Oligomer. Monomers and polymeric aggregates of &gt;1 MDa have been isolated from mitochondria. A small fraction of heterologous overexpressed recombinant frataxin forms high-molecular weight aggregates that incorporate iron. Interacts with LYRM4. Interacts (via ferrous form) with ISCU; the interaction is possible when both are bound to the dimeric form of the cysteine desulfurase complex (NFS1:LYRM4) and the interaction enhances FXN interaction to the dimeric form of the cysteine desulfurase complex (NFS1:LYRM4). Interacts with FECH; one iron-bound FXN monomer seems to interact with a FECH homodimer. Interacts with SDHA and SDHB. Interacts with ACO2; the interaction is dependent on citrate. Interacts with HSPA9. Interacts with ACO1. Interacts with ISCU (cytoplasmic form). Post-translationally, processed in two steps by mitochondrial processing peptidase (MPP). MPP first cleaves the precursor to intermediate form and subsequently converts the intermediate to yield frataxin mature form (frataxin(81-210)) which is the predominant form. The additional forms, frataxin(56-210) and frataxin(78-210), seem to be produced when the normal maturation process is impaired; their physiological relevance is unsure.

The protein resides in the mitochondrion. It localises to the cytoplasm. It is found in the cytosol. The catalysed reaction is 4 Fe(2+) + O2 + 4 H(+) = 4 Fe(3+) + 2 H2O. Functionally, functions as an activator of persulfide transfer to the scaffoding protein ISCU as component of the core iron-sulfur cluster (ISC) assembly complex and participates to the [2Fe-2S] cluster assembly. Accelerates sulfur transfer from NFS1 persulfide intermediate to ISCU and to small thiols such as L-cysteine and glutathione leading to persulfuration of these thiols and ultimately sulfide release. Binds ferrous ion and is released from FXN upon the addition of both L-cysteine and reduced FDX2 during [2Fe-2S] cluster assembly. The core iron-sulfur cluster (ISC) assembly complex is involved in the de novo synthesis of a [2Fe-2S] cluster, the first step of the mitochondrial iron-sulfur protein biogenesis. This process is initiated by the cysteine desulfurase complex (NFS1:LYRM4:NDUFAB1) that produces persulfide which is delivered on the scaffold protein ISCU in a FXN-dependent manner. Then this complex is stabilized by FDX2 which provides reducing equivalents to accomplish the [2Fe-2S] cluster assembly. Finally, the [2Fe-2S] cluster is transferred from ISCU to chaperone proteins, including HSCB, HSPA9 and GLRX5. May play a role in the protection against iron-catalyzed oxidative stress through its ability to catalyze the oxidation of Fe(2+) to Fe(3+); the oligomeric form but not the monomeric form has in vitro ferroxidase activity. May be able to store large amounts of iron in the form of a ferrihydrite mineral by oligomerization; however, the physiological relevance is unsure as reports are conflicting and the function has only been shown using heterologous overexpression systems. May function as an iron chaperone protein that protects the aconitase [4Fe-4S]2+ cluster from disassembly and promotes enzyme reactivation. May play a role as a high affinity iron binding partner for FECH that is capable of both delivering iron to ferrochelatase and mediating the terminal step in mitochondrial heme biosynthesis. Its function is as follows. Modulates the RNA-binding activity of ACO1. May be involved in the cytoplasmic iron-sulfur protein biogenesis. May contribute to oxidative stress resistance and overall cell survival. This is Frataxin, mitochondrial from Rattus norvegicus (Rat).